The following is a 218-amino-acid chain: MRLKNKPWANELVEEHPESALDRPNPAEKIDWAARFGNDKPIEIEVGSGKGQFITTLAKQHPDRNFVAMEIQKTAAGIILKKKLDEGLDNLQILCADAANLVAYFGENSTSKIYLNFSDPWPKSRHEKRRLTYKDFLAKYQAVLTGDGLIEFKTDNSGLFAYSVKSMNNYGMHFDFMSVDLHHESEEIVEKNVETEYEHKFASKGQPIYCLHAGFLAK.

The tract at residues 1–25 (MRLKNKPWANELVEEHPESALDRPN) is disordered. Positions 13-25 (VEEHPESALDRPN) are enriched in basic and acidic residues. S-adenosyl-L-methionine contacts are provided by glutamate 45, glutamate 70, aspartate 97, and aspartate 119. Residue aspartate 119 is part of the active site. Lysine 123 contacts substrate. An interaction with RNA region spans residues 125 to 130 (RHEKRR). Substrate-binding positions include aspartate 155 and 195–198 (TEYE).

This sequence belongs to the class I-like SAM-binding methyltransferase superfamily. TrmB family.

The enzyme catalyses guanosine(46) in tRNA + S-adenosyl-L-methionine = N(7)-methylguanosine(46) in tRNA + S-adenosyl-L-homocysteine. It participates in tRNA modification; N(7)-methylguanine-tRNA biosynthesis. Functionally, catalyzes the formation of N(7)-methylguanine at position 46 (m7G46) in tRNA. This Lactobacillus delbrueckii subsp. bulgaricus (strain ATCC BAA-365 / Lb-18) protein is tRNA (guanine-N(7)-)-methyltransferase.